A 142-amino-acid polypeptide reads, in one-letter code: Large ribosomal subunit protein uL11 (142 aa).

The protein belongs to the universal ribosomal protein uL11 family. In terms of assembly, part of the ribosomal stalk of the 50S ribosomal subunit. Interacts with L10 and the large rRNA to form the base of the stalk. L10 forms an elongated spine to which L12 dimers bind in a sequential fashion forming a multimeric L10(L12)X complex. One or more lysine residues are methylated.

Functionally, forms part of the ribosomal stalk which helps the ribosome interact with GTP-bound translation factors. The chain is Large ribosomal subunit protein uL11 from Shewanella sp. (strain ANA-3).